The sequence spans 367 residues: MMKWSIVKRIPVYGGSFISMKHMMLVPADLSWSCSFSGMHSLINTGEEDEEELLKKIVNHSESGSKIISKIDYTNLVEKFTRDGNLSGAYDLLQSLQEKNICLPISVFKNLLAAAGELNDMKLSCRVFREVLILPGKEPLSSDCYLNLARAFINTDDCTYLTSLLKEISESSLPYRLIVMNRIIFAFAETRQIDKVLMILKEMKEWECKPDVITYNSVLDILGRAGLVNEILGVLSTMKEDCSVSVNIITYNTVLNGMRKACRFDMCLVIYNEMVQCGIEPDLLSYTAVIDSLGRSGNVKESLRLFDEMKQRQIRPSVYVYRALIDCLKKSGDFQSALQLSDELKNTSSLDLAGPQDFKRHLRSHRR.

PPR repeat units lie at residues 69–103, 104–139, 141–175, 176–210, 211–241, 247–281, 282–316, and 317–347; these read SKID…NICL, PISV…GKEP, SSDC…SLPY, RLIV…ECKP, DVIT…MKED, NIIT…GIEP, DLLS…QIRP, and SVYV…LKNT.

This sequence belongs to the PPR family. P subfamily.

This chain is Pentatricopeptide repeat-containing protein At1g11900, found in Arabidopsis thaliana (Mouse-ear cress).